The primary structure comprises 588 residues: Probable fumarate reductase Ifc3 (588 aa).

A signal peptide spans 1 to 22 (MKLKYLVSAMALVVLSSGTAMA). Residues His31, Cys37, Cys40, His41, Cys58, Cys61, His62, His78, His81, Cys87, Cys90, His91, Gly93, His94, Cys101, Cys104, and His105 each coordinate heme c. The tract at residues 135 to 588 (AIAAGPSETT…DNAAKHALDK (454 aa)) is flavoprotein-like. Residues Ala154, Asp173, Asn181, Ser182, Gly187, and Gly188 each contribute to the FAD site. Gly187 serves as a coordination point for fumarate. Gly187 contributes to the succinate binding site. Residue Arg218 coordinates heme c. Residues Val295 and Asp361 each contribute to the FAD site. Residues His382, Ser394, and Glu395 each coordinate succinate. Fumarate-binding residues include Ser394 and Glu395. Arg419 acts as the Proton donor in catalysis. His521 lines the fumarate pocket. Residue His521 coordinates succinate. Glu551 lines the FAD pocket. 2 residues coordinate fumarate: Arg561 and Gly564. 2 residues coordinate succinate: Arg561 and Gly564. 3 residues coordinate FAD: Gly564, Ala566, and Ile567.

As to quaternary structure, homodimer. FAD is required as a cofactor. Requires heme c as cofactor.

Its subcellular location is the periplasm. In terms of biological role, flavocytochrome that catalyzes the reduction of fumarate to succinate in vitro. Is essentially unidirectional, catalyzing only fumarate reduction. In vitro, can use the artificial electron donor methyl viologen. May be involved in an alternative route for electron transport to Fe(3+). This is Probable fumarate reductase Ifc3 from Shewanella frigidimarina (strain NCIMB 400).